Reading from the N-terminus, the 244-residue chain is 1-(5-phosphoribosyl)-5-[(5-phosphoribosylamino)methylideneamino] imidazole-4-carboxamide isomerase (244 aa).

The active-site Proton acceptor is Asp9. The active-site Proton donor is Asp131.

The protein belongs to the HisA/HisF family.

The protein resides in the cytoplasm. The enzyme catalyses 1-(5-phospho-beta-D-ribosyl)-5-[(5-phospho-beta-D-ribosylamino)methylideneamino]imidazole-4-carboxamide = 5-[(5-phospho-1-deoxy-D-ribulos-1-ylimino)methylamino]-1-(5-phospho-beta-D-ribosyl)imidazole-4-carboxamide. The protein operates within amino-acid biosynthesis; L-histidine biosynthesis; L-histidine from 5-phospho-alpha-D-ribose 1-diphosphate: step 4/9. The polypeptide is 1-(5-phosphoribosyl)-5-[(5-phosphoribosylamino)methylideneamino] imidazole-4-carboxamide isomerase (Campylobacter jejuni subsp. jejuni serotype O:6 (strain 81116 / NCTC 11828)).